Here is a 98-residue protein sequence, read N- to C-terminus: NADH-ubiquinone oxidoreductase chain 4L (98 aa).

A run of 3 helical transmembrane segments spans residues 1–21, 26–46, and 61–81; these read MNLI…GLIF, IINI…LFVL, and LYIL…VVIL.

The protein belongs to the complex I subunit 4L family.

The protein localises to the mitochondrion membrane. The enzyme catalyses a ubiquinone + NADH + 5 H(+)(in) = a ubiquinol + NAD(+) + 4 H(+)(out). In terms of biological role, core subunit of the mitochondrial membrane respiratory chain NADH dehydrogenase (Complex I) that is believed to belong to the minimal assembly required for catalysis. Complex I functions in the transfer of electrons from NADH to the respiratory chain. The immediate electron acceptor for the enzyme is believed to be ubiquinone. The protein is NADH-ubiquinone oxidoreductase chain 4L (nad4L) of Dictyostelium citrinum (Slime mold).